A 129-amino-acid polypeptide reads, in one-letter code: UPF0102 protein amb4503 (129 aa).

Belongs to the UPF0102 family.

The protein is UPF0102 protein amb4503 of Paramagnetospirillum magneticum (strain ATCC 700264 / AMB-1) (Magnetospirillum magneticum).